Reading from the N-terminus, the 72-residue chain is Variant surface glycoprotein MITAT 1.1000BC (72 aa).

The GPI-anchor amidated aspartate moiety is linked to residue D50. Positions 51–72 (GSFLVNKKFALMVYDFVSLLAF) are cleaved as a propeptide — removed in mature form.

It is found in the cell membrane. Its function is as follows. VSG forms a coat on the surface of the parasite. The trypanosome evades the immune response of the host by expressing a series of antigenically distinct VSGs from an estimated 1000 VSG genes. The chain is Variant surface glycoprotein MITAT 1.1000BC from Trypanosoma brucei brucei.